We begin with the raw amino-acid sequence, 252 residues long: 5-oxoprolinase subunit A (252 aa).

It belongs to the LamB/PxpA family. As to quaternary structure, forms a complex composed of PxpA, PxpB and PxpC.

It carries out the reaction 5-oxo-L-proline + ATP + 2 H2O = L-glutamate + ADP + phosphate + H(+). Catalyzes the cleavage of 5-oxoproline to form L-glutamate coupled to the hydrolysis of ATP to ADP and inorganic phosphate. The polypeptide is 5-oxoprolinase subunit A (Staphylococcus carnosus (strain TM300)).